A 210-amino-acid polypeptide reads, in one-letter code: Large ribosomal subunit protein uL3 (210 aa).

This sequence belongs to the universal ribosomal protein uL3 family. As to quaternary structure, part of the 50S ribosomal subunit. Forms a cluster with proteins L14 and L19.

Functionally, one of the primary rRNA binding proteins, it binds directly near the 3'-end of the 23S rRNA, where it nucleates assembly of the 50S subunit. The protein is Large ribosomal subunit protein uL3 of Syntrophotalea carbinolica (strain DSM 2380 / NBRC 103641 / GraBd1) (Pelobacter carbinolicus).